A 293-amino-acid polypeptide reads, in one-letter code: Release factor glutamine methyltransferase (293 aa).

Residues 130–134 (GTGSG), Asp153, Trp182, and Asn199 each bind S-adenosyl-L-methionine. 199-202 (NPPY) is a substrate binding site.

The protein belongs to the protein N5-glutamine methyltransferase family. PrmC subfamily.

It carries out the reaction L-glutaminyl-[peptide chain release factor] + S-adenosyl-L-methionine = N(5)-methyl-L-glutaminyl-[peptide chain release factor] + S-adenosyl-L-homocysteine + H(+). Functionally, methylates the class 1 translation termination release factors RF1/PrfA and RF2/PrfB on the glutamine residue of the universally conserved GGQ motif. The protein is Release factor glutamine methyltransferase of Prochlorococcus marinus (strain SARG / CCMP1375 / SS120).